The chain runs to 291 residues: Transmembrane protein 41B (291 aa).

The segment covering 1–11 (MAKGRVADRSP) has biased composition (basic and acidic residues). The interval 1-43 (MAKGRVADRSPTEMLHSTPAGDRAVRTQGSAAPGSKDHLNEKP) is disordered. Phosphothreonine is present on Thr18. A Phosphoserine modification is found at Ser35. 6 helical membrane passes run 52 to 72 (TSLL…FLVY), 109 to 129 (FYVQ…TFAI), 147 to 169 (LALF…LSYL), 197 to 217 (LINY…FINI), 225 to 245 (PLKV…FVAI), and 262 to 282 (SWSS…PAIF). The tract at residues 140-251 (GFLYPFPLAL…FVAIKAGTTL (112 aa)) is VTT domain; required for its function in autophagy.

This sequence belongs to the TMEM41 family. As to quaternary structure, interacts with VMP1. Interacts with COPA, COPB1, VDAC1 and ERLIN2. Interacts with ATG2A. Interacts with SURF4. Expressed in brain, spinal cord, kidney and first lumbar dorsal root ganglia during postnatal development. Expressed in motor neurons and proprioceptive neurons.

The protein resides in the endoplasmic reticulum membrane. The protein localises to the endomembrane system. The enzyme catalyses a 1,2-diacyl-sn-glycero-3-phospho-L-serine(in) = a 1,2-diacyl-sn-glycero-3-phospho-L-serine(out). It catalyses the reaction cholesterol(in) = cholesterol(out). The catalysed reaction is a 1,2-diacyl-sn-glycero-3-phosphocholine(in) = a 1,2-diacyl-sn-glycero-3-phosphocholine(out). It carries out the reaction a 1,2-diacyl-sn-glycero-3-phosphoethanolamine(in) = a 1,2-diacyl-sn-glycero-3-phosphoethanolamine(out). In terms of biological role, phospholipid scramblase involved in lipid homeostasis and membrane dynamics processes. Has phospholipid scramblase activity toward cholesterol and phosphatidylserine, as well as phosphatidylethanolamine and phosphatidylcholine. Required for autophagosome formation: participates in early stages of autophagosome biogenesis at the endoplasmic reticulum (ER) membrane by reequilibrating the leaflets of the ER as lipids are extracted by ATG2 (ATG2A or ATG2B) to mediate autophagosome assembly. In addition to autophagy, involved in other processes in which phospholipid scramblase activity is required. Required for normal motor neuron development. The chain is Transmembrane protein 41B from Mus musculus (Mouse).